The chain runs to 69 residues: DNA-directed RNA polymerase subunit epsilon (69 aa).

This sequence belongs to the RNA polymerase subunit epsilon family. As to quaternary structure, RNAP is composed of a core of 2 alpha, a beta and a beta' subunit. The core is associated with a delta subunit, and at least one of epsilon or omega. When a sigma factor is associated with the core the holoenzyme is formed, which can initiate transcription.

It catalyses the reaction RNA(n) + a ribonucleoside 5'-triphosphate = RNA(n+1) + diphosphate. In terms of biological role, a non-essential component of RNA polymerase (RNAP). The polypeptide is DNA-directed RNA polymerase subunit epsilon (Listeria welshimeri serovar 6b (strain ATCC 35897 / DSM 20650 / CCUG 15529 / CIP 8149 / NCTC 11857 / SLCC 5334 / V8)).